The sequence spans 449 residues: N-succinylarginine dihydrolase (449 aa).

Residues 19-28 (GGLSYGNVAS), N110, and 137-138 (HR) contribute to the substrate site. A disordered region spans residues 23–43 (YGNVASQSNSQQASNPREAAR). Low complexity predominate over residues 27-37 (ASQSNSQQASN). The active site involves E174. Position 214 (R214) interacts with substrate. H250 is a catalytic residue. Residues D252 and N365 each coordinate substrate. C371 serves as the catalytic Nucleophile.

Belongs to the succinylarginine dihydrolase family. In terms of assembly, homodimer.

The catalysed reaction is N(2)-succinyl-L-arginine + 2 H2O + 2 H(+) = N(2)-succinyl-L-ornithine + 2 NH4(+) + CO2. Its pathway is amino-acid degradation; L-arginine degradation via AST pathway; L-glutamate and succinate from L-arginine: step 2/5. Functionally, catalyzes the hydrolysis of N(2)-succinylarginine into N(2)-succinylornithine, ammonia and CO(2). The protein is N-succinylarginine dihydrolase of Pseudomonas putida (strain ATCC 700007 / DSM 6899 / JCM 31910 / BCRC 17059 / LMG 24140 / F1).